The primary structure comprises 883 residues: MPSLNDIRSTFLDYFRRNGHRVVESSPLVPRNDPTLMFTNSGMVQFKNCFTGLEHRDYTRATTAQKCVRAGGKHNDLDNVGYTARHHTFFEMLGNFSFGDYFKSDAIPFAWELLTKDFDIPKEKLLVTVYHTDDEAAEIWKKVAGLPDERIIRIPTNDNFWMMGPTGPCGPCTEIFFDHGPSIWGGPPGSADEDGDRFIEIWNLVFMQNEQHPDGSMTPLPKQSIDTGMGLERIGALLQGKHDNYDTDLMRSLIEASAHATSTDPDGPGKTHHRVIADHLRSTSFLIADGVMPSNEGRGYVLRRIMRRAMRHAHLLGAQDPVMHRLVPALVRQMGAAYPELTRGQALIEETLKLEETRFRQTLERGLRLLEDELGHLPEGSPLPGEAAFKLYDTYGFPLDLTQDALREKGRKVDVEGFEAAMAEQKAKARASWSGSGETKDAAIWFDLAETHGATEFLGYDTEQAEGQVLALVAAGAETASAGAGQTVQIILNQTPFYAESGGQVGDTGELRTDTGRARITDVKKGQGLFLHFAEVVEGEIRQGQGATLVVDHARRSAIRANHSATHLLHEALRRALGDHVAQRGSLNAPDRLRFDFSHSRALSPEELAAVEAEVNGFIRSNGAVETRIMSPDDARALGAQALFGEKYGDEVRVVSMGTLAGSGKGTDGQTYSLELCGGTHVSRLGDIGLCVILGDSASSAGVRRIEALTGEGALAYLNEQMKRLTDVAAALKAAPAELVDRVKALVEERRQLQNEVAQLRREAAMGGGAASEAKEIGGVKFLAQVVQGVPGKDMPGLIDEMKARVGSGAVLLISDTGGKAALAAGVTPDLTDRLSAVTLVKAAAEALGGRGGGGRPDMAQAGAADASQADAAIRAAEAVMGG.

Zn(2+)-binding residues include His563, His567, Cys677, and His681.

Belongs to the class-II aminoacyl-tRNA synthetase family. Requires Zn(2+) as cofactor.

Its subcellular location is the cytoplasm. It catalyses the reaction tRNA(Ala) + L-alanine + ATP = L-alanyl-tRNA(Ala) + AMP + diphosphate. Catalyzes the attachment of alanine to tRNA(Ala) in a two-step reaction: alanine is first activated by ATP to form Ala-AMP and then transferred to the acceptor end of tRNA(Ala). Also edits incorrectly charged Ser-tRNA(Ala) and Gly-tRNA(Ala) via its editing domain. The sequence is that of Alanine--tRNA ligase from Cereibacter sphaeroides (strain ATCC 17023 / DSM 158 / JCM 6121 / CCUG 31486 / LMG 2827 / NBRC 12203 / NCIMB 8253 / ATH 2.4.1.) (Rhodobacter sphaeroides).